The sequence spans 206 residues: Flavin prenyltransferase UbiX (206 aa).

FMN-binding positions include 11-13 (GAS), S37, 103-106 (SMST), and R138. Residues Y168 and R184 each contribute to the dimethylallyl phosphate site.

Belongs to the UbiX/PAD1 family.

The catalysed reaction is dimethylallyl phosphate + FMNH2 = prenylated FMNH2 + phosphate. Its function is as follows. Flavin prenyltransferase that catalyzes the synthesis of the prenylated FMN cofactor (prenyl-FMN) for 4-hydroxy-3-polyprenylbenzoic acid decarboxylase UbiD. The prenyltransferase is metal-independent and links a dimethylallyl moiety from dimethylallyl monophosphate (DMAP) to the flavin N5 and C6 atoms of FMN. In Synechocystis sp. (strain ATCC 27184 / PCC 6803 / Kazusa), this protein is Flavin prenyltransferase UbiX.